We begin with the raw amino-acid sequence, 761 residues long: MAVVIRLLGLPFIAGPVDIRHFFTGLTIPDGGVHIIGGEIGEAFIIFATDEDARRAISRSGGFIKDSSVELFLSSKAEMQKTIEMKRTDRVGRGRPGSGTSGVGSLSNIIESVKEEASNSGYGSSINQDAGFHSNGTGHGNLRPRKTRPLKAENPYLFLRGLPYLVNEDDVRVFFSGLCVDGVIFLKHHDGRNNGDAIVKFASCVDASGGLKCHRSFMGSRFIEVMQGSEQQWIEFGGNAVKEGDVLRRSEEHSPPRGINDRHFRKRSHSKSPRRTRSRSPLGFYVHLKNLSLSIDERDLRNFFRGTDLTDEQIRFLYKDENRTRYAFVMFKTLKDYNTALSLHKTVLQYRPVHIDPISRKQMLKFIARYEKKRSGSPERDRPGHVSQKYSQEGNSGQKLCIYIRNFPFDVTKVEVQKFFADFLLAEDDIYLLYDDKGVGLGEALVKFKSEEQAMKAERLNRRRFLGTEVLLRLISEAQMQEFGVNFSLMSSEKMQARSQSRERGDHSQLFDSKDPPVYSVGAFENFKHHIEDLRQLDNFKHPQRDFRQPDRHPPEEFRHSSEDFRFPPEDFRHSPEDFRRPREEDFRRPSEEDFRRPWEEDFRRPPEDDFRHPREEDWRRPLGGLLQSTSGGHPQSISGGHPQSISGARPRSTSGDRPRSISGGRLRSISGAPERKISGTHQMKTSGALPMKTLGTLLMRTSGAPRRKILDALLMRTSGSSQRKTLGKLRRRTLDFLTILDLLVRILGARLMILEVTALL.

Phosphoserine is present on residues serine 98, serine 101, and serine 112. Residue lysine 114 forms a Glycyl lysine isopeptide (Lys-Gly) (interchain with G-Cter in SUMO2) linkage. The segment at 120–147 (SGYGSSINQDAGFHSNGTGHGNLRPRKT) is disordered. Lysine 151 participates in a covalent cross-link: Glycyl lysine isopeptide (Lys-Gly) (interchain with G-Cter in SUMO2). Positions 155–230 (PYLFLRGLPY…RFIEVMQGSE (76 aa)) constitute an RRM 1 domain. Basic and acidic residues predominate over residues 247–262 (LRRSEEHSPPRGINDR). Positions 247–278 (LRRSEEHSPPRGINDRHFRKRSHSKSPRRTRS) are disordered. A phosphoserine mark is found at serine 250 and serine 254. A compositionally biased stretch (basic residues) spans 263–278 (HFRKRSHSKSPRRTRS). Threonine 276 bears the Phosphothreonine mark. 4 positions are modified to phosphoserine: serine 278, serine 280, serine 292, and serine 294. The RRM 2 domain maps to 284–360 (FYVHLKNLSL…RPVHIDPISR (77 aa)). An N6-acetyllysine modification is found at lysine 319. Residue lysine 335 forms a Glycyl lysine isopeptide (Lys-Gly) (interchain with G-Cter in SUMO2) linkage. Over residues 372 to 384 (KKRSGSPERDRPG) the composition is skewed to basic and acidic residues. The segment at 372–392 (KKRSGSPERDRPGHVSQKYSQ) is disordered. Serine 377 is subject to Phosphoserine. An RRM 3 domain is found at 400–477 (LCIYIRNFPF…TEVLLRLISE (78 aa)). Residues lysine 514 and lysine 541 each participate in a glycyl lysine isopeptide (Lys-Gly) (interchain with G-Cter in SUMO2) cross-link. A compositionally biased stretch (basic and acidic residues) spans 538 to 621 (DNFKHPQRDF…RHPREEDWRR (84 aa)). The segment at 538–690 (DNFKHPQRDF…THQMKTSGAL (153 aa)) is disordered. 2 positions are modified to phosphoserine: serine 575 and serine 591. A compositionally biased stretch (polar residues) spans 627–654 (LQSTSGGHPQSISGGHPQSISGARPRST). The span at 661–672 (SISGGRLRSISG) shows a compositional bias: low complexity.

This Pongo abelii (Sumatran orangutan) protein is RNA-binding protein 12B (RBM12B).